A 284-amino-acid polypeptide reads, in one-letter code: Ermin (284 aa).

A disordered region spans residues 1–23 (MTDVPATFTQAECNGDKPPENGQ). S73 carries the phosphoserine modification. The segment at 110-251 (REGHQWEKIP…PTLGKKSDIS (142 aa)) is disordered. Composition is skewed to basic and acidic residues over residues 126 to 140 (EIRRQKERITEQPLK) and 171 to 183 (LHSKHDEEQKVWD). The segment covering 184–200 (EEIDDDDDDNCNNDEDE) has biased composition (acidic residues). Residues 201–220 (VRVIEFKKKHEEVSQFKEEG) are compositionally biased toward basic and acidic residues. A phosphoserine mark is found at S214, S226, S230, and S233. A compositionally biased stretch (low complexity) spans 225–235 (DSPLSSASSQA). T237 carries the phosphothreonine modification. Residues 265–284 (KIRKGNTKQRIDEFESMMHL) are binds actin.

As to quaternary structure, binds actin. Highly expressed in adult and fetal brain. Expressed at intermediate levels in the lung and liver.

The protein resides in the cytoplasm. Its subcellular location is the cytoskeleton. Its function is as follows. Plays a role in cytoskeletal rearrangements during the late wrapping and/or compaction phases of myelinogenesis as well as in maintenance and stability of myelin sheath in the adult. May play an important role in late-stage oligodendroglia maturation, myelin/Ranvier node formation during CNS development, and in the maintenance and plasticity of related structures in the mature CNS. This chain is Ermin (ERMN), found in Homo sapiens (Human).